The following is a 391-amino-acid chain: MSAAADRLNLTSGHLNAGRKRSSSSVSLKAAEKPFKVTVIGSGNWGTTIAKVVAENCKGYPEVFAPIVQMWVFEEEINGEKLTEIINTRHQNVKYLPGITLPDNLVANPDLIDSVKDVDIIVFNIPHQFLPRICSQLKGHVDSHVRAISCLKGFEVGAKGVQLLSSYITEELGIQCGALSGANIATEVAQEHWSETTVAYHIPKDFRGEGKDVDHKVLKALFHRPYFHVSVIEDVAGISICGALKNVVALGCGFVEGLGWGNNASAAIQRVGLGEIIRFGQMFFPESREETYYQESAGVADLITTCAGGRNVKVARLMATSGKDAWECEKELLNGQSAQGLITCKEVHEWLETCGSVEDFPLFEAVYQIVYNNYPMKNLPDMIEELDLHED.

Residues 41 to 46 (GSGNWG), Phe-129, Lys-152, and Ala-185 contribute to the NAD(+) site. Lys-152 contributes to the substrate binding site. The Proton acceptor role is filled by Lys-245. Residues Arg-310 and Gln-339 each contribute to the NAD(+) site. 310 to 311 (RN) provides a ligand contact to substrate.

This sequence belongs to the NAD-dependent glycerol-3-phosphate dehydrogenase family.

It localises to the cytoplasm. It catalyses the reaction sn-glycerol 3-phosphate + NAD(+) = dihydroxyacetone phosphate + NADH + H(+). The polypeptide is Glycerol-3-phosphate dehydrogenase [NAD(+)] 1 (GPD1) (Saccharomyces uvarum (Yeast)).